The chain runs to 390 residues: tRNA (guanine(26)-N(2))-dimethyltransferase (390 aa).

A Trm1 methyltransferase domain is found at 4-378 (HIIEEGLVKI…MPLDELKQLI (375 aa)). Positions 37, 67, 85, 112, and 113 each coordinate S-adenosyl-L-methionine. Cys-245, Cys-248, Cys-265, and Cys-268 together coordinate Zn(2+).

This sequence belongs to the class I-like SAM-binding methyltransferase superfamily. Trm1 family.

It catalyses the reaction guanosine(26) in tRNA + 2 S-adenosyl-L-methionine = N(2)-dimethylguanosine(26) in tRNA + 2 S-adenosyl-L-homocysteine + 2 H(+). Dimethylates a single guanine residue at position 26 of a number of tRNAs using S-adenosyl-L-methionine as donor of the methyl groups. This is tRNA (guanine(26)-N(2))-dimethyltransferase from Methanosphaera stadtmanae (strain ATCC 43021 / DSM 3091 / JCM 11832 / MCB-3).